The following is a 406-amino-acid chain: Sprouty-related, EVH1 domain-containing protein 1 (406 aa).

In terms of domain architecture, WH1 spans G3–L120. A disordered region spans residues L124–H154. Over residues N142 to H154 the composition is skewed to basic and acidic residues. Residues P195–T247 enclose the KBD domain. One can recognise an SPR domain in the interval S296–A404.

In terms of processing, palmitoylated by ZDHHC17/HIP14. Post-translationally, ubiquitinated. Phosphorylated on tyrosine.

The protein localises to the cell membrane. Its function is as follows. Tyrosine kinase substrate that inhibits growth-factor-mediated activation of MAP kinase. This is Sprouty-related, EVH1 domain-containing protein 1 (spred1) from Xenopus tropicalis (Western clawed frog).